Here is a 514-residue protein sequence, read N- to C-terminus: Voltage-gated potassium channel regulatory subunit KCNG1 (514 aa).

Topologically, residues 1-224 (MTLLPGDNSH…DMVERPHSGL (224 aa)) are cytoplasmic. Positions 180 to 196 (MEREEEEEPLDSEDQES) are enriched in acidic residues. The disordered stretch occupies residues 180-205 (MEREEEEEPLDSEDQESEGPSASEGR). Residues 225 to 246 (PGKVFACLSVLFVTVTAVNLSV) form a helical membrane-spanning segment. The Extracellular portion of the chain corresponds to 247 to 267 (STLPSLREEEEQGQCSQMCHN). The helical transmembrane segment at 268–289 (VFIVESVCVGWFSLEFLLRFIQ) threads the bilayer. Residues 290 to 300 (APSKFAFLRSP) are Cytoplasmic-facing. Residues 301–321 (LTLIDLVAILPYYVTLLVDGA) traverse the membrane as a helical segment. Residues 322-338 (ASSRRKPSTGNSYLDKV) lie on the Extracellular side of the membrane. Residues 339-359 (GLVLRVLRALRILYVMRLARH) form a helical; Voltage-sensor membrane-spanning segment. Over 360-374 (SLGLQTLGLTARRCT) the chain is Cytoplasmic. The helical transmembrane segment at 375–396 (REFGLLLLFLCVAIALFAPLLY) threads the bilayer. Residues 397–411 (VIENEMADSPEFTSI) lie on the Extracellular side of the membrane. Positions 412–423 (PACYWWAVITMT) form an intramembrane region, helical. Positions 424 to 429 (TVGYGD) match the Selectivity filter motif. The stretch at 424–431 (TVGYGDMV) is an intramembrane region. Residues 432 to 438 (PRSTPGQ) lie on the Extracellular side of the membrane. Residues 439 to 467 (VVALSSILSGILLMAFPVTSIFHTFSRSY) traverse the membrane as a helical segment. Over 468–514 (LELKQEQERVLIRRAQYLIKTKSQLSGMSQDSDILFGSASSDTRDNN) the chain is Cytoplasmic.

Belongs to the potassium channel family. G (TC 1.A.1.2) subfamily. Kv6.1/KCNG1 sub-subfamily. In terms of assembly, heterotetramer with KCNB1 or KCNB2.

The protein resides in the cell membrane. In terms of biological role, regulatory alpha-subunit of the voltage-gated potassium (Kv) channel which, when coassembled with KCNB1 or KCNB2, can modulate their expression and their gating kinetics by acting on deactivation upon repolarization and inactivation during maintained depolarization. Potassium channel subunit that does not form functional channels by itself. This Mus musculus (Mouse) protein is Voltage-gated potassium channel regulatory subunit KCNG1.